A 339-amino-acid chain; its full sequence is MASTAFVCAEPEGDALPPSLQNLLDQDSLKWIFVGGKGGVGKTTTSCSLAIQLAAVRESVLLISTDPAHNLSDAFSQKFGKEASKVNGFTNLFAMEIDPSASMQDMVESGDDSGMNGMMQDLAFAIPGIDEAMGFAEVMKHVKSMQFSAIVFDTAPTGHTLRFLSFPSVLEKALGKLSGLSGRFGPMLNQIGSMMGGGLNTSEMFEKLESMREVVTEVNAQFKNPDLTTFVPVMISEFLSLYETERLIQELTQYQIDVHDIVVNQLLYPENDSQCKHCKVRWTQQQKYLKEAYELYGEDFHIVRMPLLSQEVRGTDALKKCLLIEPYKAGQVVDLSASS.

37–44 (KGGVGKTT) provides a ligand contact to ATP. Residue aspartate 66 is part of the active site. The ATP site is built by glutamate 237 and asparagine 264. Positions 275 and 278 each coordinate Zn(2+).

The protein belongs to the arsA ATPase family. Homodimer.

The protein localises to the cytoplasm. It is found in the endoplasmic reticulum. ATPase required for the post-translational delivery of tail-anchored (TA) proteins to the endoplasmic reticulum. Recognizes and selectively binds the transmembrane domain of TA proteins in the cytosol. This complex then targets to the endoplasmic reticulum by membrane-bound receptors, where the tail-anchored protein is released for insertion. This process is regulated by ATP binding and hydrolysis. ATP binding drives the homodimer towards the closed dimer state, facilitating recognition of newly synthesized TA membrane proteins. ATP hydrolysis is required for insertion. Subsequently, the homodimer reverts towards the open dimer state, lowering its affinity for the membrane-bound receptor, and returning it to the cytosol to initiate a new round of targeting. This is ATPase GET3 from Rhodotorula glutinis (Yeast).